A 387-amino-acid polypeptide reads, in one-letter code: 3-ketoacyl-CoA thiolase (387 aa).

Cysteine 91 acts as the Acyl-thioester intermediate in catalysis. Residues histidine 343 and cysteine 373 each act as proton acceptor in the active site.

Belongs to the thiolase-like superfamily. Thiolase family. Heterotetramer of two alpha chains (FadB) and two beta chains (FadA).

It localises to the cytoplasm. It carries out the reaction an acyl-CoA + acetyl-CoA = a 3-oxoacyl-CoA + CoA. The protein operates within lipid metabolism; fatty acid beta-oxidation. Catalyzes the final step of fatty acid oxidation in which acetyl-CoA is released and the CoA ester of a fatty acid two carbons shorter is formed. The protein is 3-ketoacyl-CoA thiolase of Serratia proteamaculans (strain 568).